The chain runs to 266 residues: Undecaprenyl-diphosphatase (266 aa).

The next 8 membrane-spanning stretches (helical) occupy residues 1–21 (MMSW…TEFL), 43–63 (ASVF…VIYW), 81–101 (LYGI…GFLF), 107–127 (TLFT…FMLI), 145–165 (LTPK…WPGF), 183–203 (HLAA…ATGY), 219–239 (LFIT…KVFI), and 245–265 (ISLR…YLCI).

It belongs to the UppP family.

It localises to the cell membrane. It carries out the reaction di-trans,octa-cis-undecaprenyl diphosphate + H2O = di-trans,octa-cis-undecaprenyl phosphate + phosphate + H(+). In terms of biological role, catalyzes the dephosphorylation of undecaprenyl diphosphate (UPP). Confers resistance to bacitracin. This Lawsonia intracellularis (strain PHE/MN1-00) protein is Undecaprenyl-diphosphatase.